The primary structure comprises 302 residues: 1D-myo-inositol 2-acetamido-2-deoxy-alpha-D-glucopyranoside deacetylase (302 aa).

Residues H12, D15, and H147 each coordinate Zn(2+).

This sequence belongs to the MshB deacetylase family. Zn(2+) serves as cofactor.

The catalysed reaction is 1D-myo-inositol 2-acetamido-2-deoxy-alpha-D-glucopyranoside + H2O = 1D-myo-inositol 2-amino-2-deoxy-alpha-D-glucopyranoside + acetate. Functionally, catalyzes the deacetylation of 1D-myo-inositol 2-acetamido-2-deoxy-alpha-D-glucopyranoside (GlcNAc-Ins) in the mycothiol biosynthesis pathway. The protein is 1D-myo-inositol 2-acetamido-2-deoxy-alpha-D-glucopyranoside deacetylase of Thermobispora bispora (strain ATCC 19993 / DSM 43833 / CBS 139.67 / JCM 10125 / KCTC 9307 / NBRC 14880 / R51).